Here is a 567-residue protein sequence, read N- to C-terminus: Polyadenylate-binding protein-interacting protein 7 (567 aa).

The interval Met1 to Leu22 is disordered. Residues Ser13–Leu22 are compositionally biased toward polar residues. The PAM2-like motif lies at Thr21–Pro31. The region spanning Asp215–Leu259 is the CUE domain. Residues Arg355 to Ser387 form a disordered region. A compositionally biased stretch (polar residues) spans Ala359–Ala371. Positions Ile485–Tyr567 constitute a Smr domain.

In terms of assembly, interacts with MPC and PAB2. Expressed in cauline leaves, stems, rosette leaves, immature siliques and primary inflorescences.

The protein is Polyadenylate-binding protein-interacting protein 7 (CID7) of Arabidopsis thaliana (Mouse-ear cress).